A 292-amino-acid polypeptide reads, in one-letter code: Ribosomal protein L11 methyltransferase (292 aa).

4 residues coordinate S-adenosyl-L-methionine: threonine 144, glycine 165, aspartate 187, and asparagine 229.

It belongs to the methyltransferase superfamily. PrmA family.

The protein localises to the cytoplasm. It catalyses the reaction L-lysyl-[protein] + 3 S-adenosyl-L-methionine = N(6),N(6),N(6)-trimethyl-L-lysyl-[protein] + 3 S-adenosyl-L-homocysteine + 3 H(+). In terms of biological role, methylates ribosomal protein L11. This is Ribosomal protein L11 methyltransferase from Pseudomonas fluorescens (strain SBW25).